We begin with the raw amino-acid sequence, 675 residues long: Putative methyl-accepting chemotaxis AlkN (675 aa).

The next 2 helical transmembrane spans lie at 24–44 (IALY…FLLS) and 303–323 (FPSV…FFII). Residues 343-394 (QRNQAAILRLLDELGDLADGDLTVQATVTEDFTGAIADSINYSIDQLRNLVQ) enclose the HAMP domain. One can recognise a Methyl-accepting transducer domain in the interval 399-635 (SAVQVASAAQ…HISNTMNVIQ (237 aa)).

The protein belongs to the methyl-accepting chemotaxis (MCP) protein family.

The protein localises to the membrane. The protein operates within hydrocarbon metabolism; alkane degradation. Its function is as follows. Chemotactic-signal transducers respond to changes in the concentration of attractants and repellents in the environment, transduce a signal from the outside to the inside of the cell, and facilitate sensory adaptation through the variation of the level of methylation. The polypeptide is Putative methyl-accepting chemotaxis AlkN (Alcanivorax borkumensis (strain ATCC 700651 / DSM 11573 / NCIMB 13689 / SK2)).